Consider the following 395-residue polypeptide: Allantoicase (395 aa).

This sequence belongs to the allantoicase family.

It carries out the reaction allantoate + H2O = (S)-ureidoglycolate + urea. It participates in nitrogen metabolism; (S)-allantoin degradation; (S)-ureidoglycolate from allantoate (aminidohydrolase route): step 1/1. Utilization of purines as secondary nitrogen sources, when primary sources are limiting. This chain is Allantoicase (allc), found in Danio rerio (Zebrafish).